The following is a 380-amino-acid chain: Probable transposase for insertion sequence element IS701 (380 aa).

Its function is as follows. Involved in the transposition of the insertion sequence. In Microchaete diplosiphon (Fremyella diplosiphon), this protein is Probable transposase for insertion sequence element IS701.